A 511-amino-acid chain; its full sequence is ATP synthase subunit alpha (511 aa).

169–176 (GDRQTGKT) contributes to the ATP binding site.

It belongs to the ATPase alpha/beta chains family. In terms of assembly, F-type ATPases have 2 components, CF(1) - the catalytic core - and CF(0) - the membrane proton channel. CF(1) has five subunits: alpha(3), beta(3), gamma(1), delta(1), epsilon(1). CF(0) has three main subunits: a(1), b(2) and c(9-12). The alpha and beta chains form an alternating ring which encloses part of the gamma chain. CF(1) is attached to CF(0) by a central stalk formed by the gamma and epsilon chains, while a peripheral stalk is formed by the delta and b chains.

The protein resides in the cell inner membrane. It catalyses the reaction ATP + H2O + 4 H(+)(in) = ADP + phosphate + 5 H(+)(out). Its function is as follows. Produces ATP from ADP in the presence of a proton gradient across the membrane. The alpha chain is a regulatory subunit. This chain is ATP synthase subunit alpha, found in Bartonella quintana (strain Toulouse) (Rochalimaea quintana).